The sequence spans 959 residues: Nucleoporin NUP100/NSP100 (959 aa).

Residues 1–104 form a disordered region; sequence MFGNNRPMFG…NSSNASNGNT (104 aa). FG repeat units follow at residues 2–3, 9–10, and Gly17; these read FG. The span at 12-36 shows a compositional bias: polar residues; that stretch reads SNLSFGSNTSSFGGQQSQQPNSLFG. The SLFG 1; approximate repeat unit spans residues 21–24; that stretch reads SSFG. An SLFG 2 repeat occupies 33 to 36; the sequence is SLFG. Residues 37–48 show a composition bias toward low complexity; that stretch reads NSNNNNNSTSNN. An SLFG 3; approximate repeat occupies 51–54; that stretch reads SGFG. Composition is skewed to low complexity over residues 56 to 81 and 92 to 104; these read FTSA…AFGQ and GSLN…NGNT. Residues 66 to 69 form an SLFG 4 repeat; sequence SLFG. A GLFG 1; approximate repeat occupies 77-80; sequence GAFG. The SLFG 5; approximate repeat unit spans residues 89-92; it reads SPFG. The FG 4 repeat unit spans residues 105 to 106; that stretch reads FG. The GLFG 2; approximate repeat unit spans residues 112 to 115; sequence GSFG. Residues 121–136 are compositionally biased toward low complexity; sequence AFNNNSNSTNSPFGFN. A disordered region spans residues 121–172; sequence AFNNNSNSTNSPFGFNKPNTGGTLFGSQNNNSAGTSSLFGGQSTSTTGTFGN. The SLFG 6; approximate repeat unit spans residues 131-134; the sequence is SPFG. Positions 137-153 are enriched in polar residues; sequence KPNTGGTLFGSQNNNSA. Residues 145-146 form an FG 5 repeat; the sequence is FG. The segment covering 154 to 172 has biased composition (low complexity); the sequence is GTSSLFGGQSTSTTGTFGN. Residues 157 to 160 form an SLFG 7 repeat; the sequence is SLFG. A GLFG 3; approximate repeat occupies 168–171; the sequence is GTFG. The SLFG 8; approximate repeat unit spans residues 175-178; that stretch reads SSFG. An FG 6 repeat occupies 189 to 190; it reads FG. The segment at 190-394 is disordered; it reads GAGNNSQSNT…NNQQQQSTGL (205 aa). The segment covering 192–245 has biased composition (polar residues); sequence GNNSQSNTTGSLFGNQQSSAFGTNNQQGSLFGQQSQNTNNAFGNQNQLGGSSFG. One copy of the SLFG 9 repeat lies at 202–205; that stretch reads SLFG. An SLFG 10; approximate repeat occupies 210–213; sequence SAFG. An SLFG 11 repeat occupies 220–223; the sequence is SLFG. One copy of the FG 7 repeat lies at 233-234; the sequence is FG. An SLFG 12; approximate repeat occupies 242–245; sequence SSFG. The stretch at 253–256 is one SLFG 13 repeat; that stretch reads SLFG. Residues 259 to 293 show a composition bias toward low complexity; it reads NNTLGNTTNNRNGLFGQMNSSNQGSSNSGLFGQNS. GLFG repeat units follow at residues 271 to 274 and 287 to 290; these read GLFG. The segment covering 294–303 has biased composition (polar residues); it reads MNSSTQGVFG. A GLFG 6; approximate repeat occupies 300-303; that stretch reads GVFG. The segment covering 304-317 has biased composition (low complexity); the sequence is QNNNQMQINGNNNN. One copy of the SLFG 14 repeat lies at 318-321; the sequence is SLFG. GLFG repeat units lie at residues 333-336, 345-348, 358-361, 379-382, and 393-396; these read GLFG. Over residues 336–352 the composition is skewed to low complexity; it reads GQNNQQQGSGLFGQNSQ. The segment covering 353 to 377 has biased composition (polar residues); it reads TSGSSGLFGQNNQKQPNTFTQSNTG. 3 SLFG repeats span residues 405–408, 417–420, and 436–439; these read SLFG. An FG 8 repeat occupies 448-449; it reads FG. Residues 462–465 form an SLFG 18 repeat; it reads SLFG. The stretch at 474–477 is one SLFG 19; approximate repeat; sequence SLFG. GLFG repeat units follow at residues 490-493, 506-509, and 523-526; these read GLFG. The FG 9 repeat unit spans residues 542–543; sequence FG. The GLFG 15 repeat unit spans residues 550–553; sequence GLFG. One copy of the FG 10 repeat lies at 569–570; sequence FG. Disordered regions lie at residues 672–697 and 745–794; these read TLER…LNSN and DDQA…PMIE. The segment covering 679–697 has biased composition (polar residues); the sequence is GSSTSNSITDPESSYLNSN. The span at 757–775 shows a compositional bias: basic and acidic residues; that stretch reads LTEKAHSPQTDLKDDHDES. Ser763 and Ser783 each carry phosphoserine. Residues 777-790 show a composition bias toward polar residues; the sequence is PDPQSKSPNGSTSI. The region spanning 814-956 is the Peptidase S59 domain; the sequence is KNNYYISPSI…GTYSYTIDHP (143 aa). The tract at residues 816–955 is nucleoporin RNA-binding motif (NRM); that stretch reads NYYISPSIET…TGTYSYTIDH (140 aa).

It belongs to the nucleoporin GLFG family. In terms of assembly, component of the nuclear pore complex (NPC). NPC constitutes the exclusive means of nucleocytoplasmic transport. NPCs allow the passive diffusion of ions and small molecules and the active, nuclear transport receptor-mediated bidirectional transport of macromolecules such as proteins, RNAs, ribonucleoparticles (RNPs), and ribosomal subunits across the nuclear envelope. Due to its 8-fold rotational symmetry, all subunits are present with 8 copies or multiples thereof. Through its FG repeats NUP100 interacts with numerous karyopherins including KAP95, and MEX67.

The protein resides in the nucleus. It localises to the nuclear pore complex. It is found in the nucleus membrane. Functions as a component of the nuclear pore complex (NPC). NPC components, collectively referred to as nucleoporins (NUPs), can play the role of both NPC structural components and of docking or interaction partners for transiently associated nuclear transport factors. Active directional transport is assured by both, a Phe-Gly (FG) repeat affinity gradient for these transport factors across the NPC and a transport cofactor concentration gradient across the nuclear envelope (GSP1 and GSP2 GTPases associated predominantly with GTP in the nucleus, with GDP in the cytoplasm). NUP100 plays an important role in several nuclear export and import pathways including poly(A)+ RNA and protein transport. The chain is Nucleoporin NUP100/NSP100 (NUP100) from Saccharomyces cerevisiae (strain ATCC 204508 / S288c) (Baker's yeast).